A 677-amino-acid polypeptide reads, in one-letter code: DNA-directed RNA polymerase subunit beta' (677 aa).

The Zn(2+) site is built by cysteine 69, cysteine 71, cysteine 87, and cysteine 90. Residues aspartate 489, aspartate 491, and aspartate 493 each contribute to the Mg(2+) site.

The protein belongs to the RNA polymerase beta' chain family. RpoC1 subfamily. In terms of assembly, in plastids the minimal PEP RNA polymerase catalytic core is composed of four subunits: alpha, beta, beta', and beta''. When a (nuclear-encoded) sigma factor is associated with the core the holoenzyme is formed, which can initiate transcription. Requires Mg(2+) as cofactor. The cofactor is Zn(2+).

It localises to the plastid. The protein localises to the chloroplast. It catalyses the reaction RNA(n) + a ribonucleoside 5'-triphosphate = RNA(n+1) + diphosphate. Its function is as follows. DNA-dependent RNA polymerase catalyzes the transcription of DNA into RNA using the four ribonucleoside triphosphates as substrates. This chain is DNA-directed RNA polymerase subunit beta', found in Daucus carota (Wild carrot).